Here is a 138-residue protein sequence, read N- to C-terminus: Large ribosomal subunit protein uL16 (138 aa).

Residues 1–13 (MLQPSRRKYRKEQ) show a composition bias toward basic residues. Residues 1 to 22 (MLQPSRRKYRKEQKGRNTGLAT) are disordered.

The protein belongs to the universal ribosomal protein uL16 family. Part of the 50S ribosomal subunit.

In terms of biological role, binds 23S rRNA and is also seen to make contacts with the A and possibly P site tRNAs. This is Large ribosomal subunit protein uL16 from Bordetella petrii (strain ATCC BAA-461 / DSM 12804 / CCUG 43448).